Reading from the N-terminus, the 361-residue chain is AT-hook motif nuclear-localized protein 12 (361 aa).

Disordered stretches follow at residues 29–143 and 286–361; these read SQVA…GRKQ and NNKT…LTRG. The segment covering 48-59 has biased composition (polar residues); that stretch reads SNPNIHHPQANN. Pro residues predominate over residues 85 to 95; that stretch reads QPPPPPPPPEE. The short motif at 99–107 is the Bipartite nuclear localization signal element; the sequence is KRKRGRPRK. 2 DNA-binding regions (a.T hook) span residues 99–111 and 130–142; these read KRKR…YGEP and KRAR…TGRK. Residues 154–297 form the PPC domain; that stretch reads TSAGLAFAPH…KTIRQEKEPN (144 aa). Residues 306-322 show a composition bias toward low complexity; that stretch reads ETTPGSAAEPAASAGQQ.

Homodimer. Interacts with AHL27, AHL29 and ATAF2/NAC081.

The protein resides in the nucleus. Functionally, transcription factor that specifically binds AT-rich DNA sequences related to the nuclear matrix attachment regions (MARs). In Arabidopsis thaliana (Mouse-ear cress), this protein is AT-hook motif nuclear-localized protein 12.